Consider the following 96-residue polypeptide: Large ribosomal subunit protein uL23 (96 aa).

It belongs to the universal ribosomal protein uL23 family. In terms of assembly, part of the 50S ribosomal subunit. Contacts protein L29, and trigger factor when it is bound to the ribosome.

Its function is as follows. One of the early assembly proteins it binds 23S rRNA. One of the proteins that surrounds the polypeptide exit tunnel on the outside of the ribosome. Forms the main docking site for trigger factor binding to the ribosome. This is Large ribosomal subunit protein uL23 from Desulfovibrio desulfuricans (strain ATCC 27774 / DSM 6949 / MB).